The primary structure comprises 875 residues: Cell surface glycoprotein (875 aa).

Positions 1 to 23 are cleaved as a signal peptide; that stretch reads MTNTKQKINAVFLSALMVMSVFA. Over residues 137–157 the composition is skewed to polar residues; it reads EVQNGGSGDVTGSTLQTSSSG. Disordered stretches follow at residues 137–158 and 197–217; these read EVQNGGSGDVTGSTLQTSSSGP and LPTADRNNDNGASGSNGDFDV. Residues 205–216 are compositionally biased toward low complexity; that stretch reads DNGASGSNGDFD. Residue N253 is glycosylated (N-linked (GlcNAc...) asparagine). A disordered region spans residues 380–414; sequence YPASDSSNDGYASGGSHASSVTVRDTDGDGTDDSE. Over residues 383–402 the composition is skewed to polar residues; it reads SDSSNDGYASGGSHASSVTV. N-linked (GlcNAc...) asparagine glycans are attached at residues N455, N563, N715, and N774. Positions 794–852 are disordered; the sequence is EAGSLEEEQPDTETPEPDTETPEPDTETPEPDTETPEPDTETPEPDTETEEATTEASGP. Acidic residues predominate over residues 797 to 846; that stretch reads SLEEEQPDTETPEPDTETPEPDTETPEPDTETPEPDTETPEPDTETEEAT. Residues 851-875 form a helical membrane-spanning segment; it reads GPGFTAAIALIALVAAALLAVRRDN. Positions 852–854 match the PGF sorting signal motif; it reads PGF.

Belongs to the halobacterial S-layer protein family. In terms of processing, asn-455 is glycosylated by a pentasaccharide comprising a hexose, 2 hexuronic acids, a methyl ester of a hexuronic acid and a final hexose. The complete pentasaccharide is first assembled on dolichol phosphate and then transferred the glycan to the target Asn. Cleaved by the archaeosortase ArtA at the C-terminus, with removal of a short hydrophobic segment. Post-translationally, lipidation.

It is found in the secreted. It localises to the cell wall. Its subcellular location is the S-layer. The protein resides in the cell membrane. In terms of biological role, S-layer protein. The S-layer is a paracrystalline mono-layered assembly of proteins which coat the surface of the cell. This Haloarcula marismortui (strain ATCC 43049 / DSM 3752 / JCM 8966 / VKM B-1809) (Halobacterium marismortui) protein is Cell surface glycoprotein (csg1).